The following is a 234-amino-acid chain: MKTNILTIIILSCVFSYGSQLAYADENLKDLKRSLRFAYNITPCDYENVEIAFVTTNSIHINTKQKRSECILYVDSIVSLGITDQFIKGDKVDVFGLPYNFSPPYVDNIYGGIVKHSNQGNKSLQFVGILNQDGKETYLPSEVVRIKKKQFTLQEFDLKIRKFLMEKYNIYDSESRYTSGSLFLATKDSKHYEVDLFNKDDKLLSRDSFFKRYKDNKIFNSEEISHFDIYLKTY.

A signal peptide spans methionine 1–alanine 24.

It belongs to the staphylococcal/streptococcal toxin family.

Its function is as follows. Mitogenic for human peripheral blood lymphocytes. This Streptococcus pyogenes serotype M3 (strain ATCC BAA-595 / MGAS315) protein is Exotoxin type G (speG).